We begin with the raw amino-acid sequence, 664 residues long: E3 ubiquitin-protein ligase CHFR (664 aa).

Residues 1–21 (MERPEEGKQSPPPQPWGRLLR) are disordered. In terms of domain architecture, FHA spans 38-89 (WTIGRRRGCDLSFPSNKLVSGDHCRIVVDEKSGQVTLEDTSTSGTVINKLKV). Residues 142-267 (FHGTKDTSGA…KKMRGDGDLD (126 aa)) are disordered. Residues 186–198 (PTASASSTEPSPA) are compositionally biased toward low complexity. At S244 the chain carries Phosphoserine. Residues 254-264 (EPVKKKMRGDG) are compositionally biased toward basic and acidic residues. An RING-type zinc finger spans residues 304–343 (CIICQDLLHDCVSLQPCMHTFCAACYSGWMERSSLCPTCR). T386 carries the phosphothreonine modification. Disordered stretches follow at residues 388–417 (DMLQ…VDSE) and 439–461 (AQPP…GDAP). Positions 400–417 (DEEGSSEDLLELSDVDSE) are enriched in acidic residues. The PBZ-type zinc-finger motif lies at 633-655 (PDCYWGRNCRTQVKAHHAMKFNH).

It belongs to the CHFR family. As to quaternary structure, interacts with HDAC1 and HDAC2. Interacts with PML (with sumoylated form of PML). In terms of processing, poly-ADP-ribosylated. In addition to binding non covalently poly(ADP-ribose) via its PBZ-type zinc finger, the protein is also covalently poly-ADP-ribosylated by PARP1. Post-translationally, autoubiquitinated; may regulate its cellular level. Phosphorylated by PKB. Phosphorylation may affect its E3 ligase activity. As to expression, ubiquitous.

Its subcellular location is the nucleus. It localises to the PML body. It carries out the reaction S-ubiquitinyl-[E2 ubiquitin-conjugating enzyme]-L-cysteine + [acceptor protein]-L-lysine = [E2 ubiquitin-conjugating enzyme]-L-cysteine + N(6)-ubiquitinyl-[acceptor protein]-L-lysine.. It participates in protein modification; protein ubiquitination. Functionally, E3 ubiquitin-protein ligase that functions in the antephase checkpoint by actively delaying passage into mitosis in response to microtubule poisons. Acts in early prophase before chromosome condensation, when the centrosome move apart from each other along the periphery of the nucleus. Probably involved in signaling the presence of mitotic stress caused by microtubule poisons by mediating the 'Lys-48'-linked ubiquitination of target proteins, leading to their degradation by the proteasome. Promotes the ubiquitination and subsequent degradation of AURKA and PLK1. Probably acts as a tumor suppressor, possibly by mediating the polyubiquitination of HDAC1, leading to its degradation. May also promote the formation of 'Lys-63'-linked polyubiquitin chains and functions with the specific ubiquitin-conjugating UBC13-MMS2 (UBE2N-UBE2V2) heterodimer. Substrates that are polyubiquitinated at 'Lys-63' are usually not targeted for degradation, but are rather involved in signaling cellular stress. The polypeptide is E3 ubiquitin-protein ligase CHFR (CHFR) (Homo sapiens (Human)).